We begin with the raw amino-acid sequence, 335 residues long: MGEKATPAVYKRYICSFADCSASYNKNWKLQAHLCKHTGERPFPCTVEGCGKGFVTLFHLTRHSMTHTGEKPCKCDAPDCDLSFTTMTNLRKHYQRAHLSPSLIYECYFADCGQTFKKHNQLKLHQYIHTNQQPFKCNHEGCDKSFSSPSRLKRHEKVHAGYPCQKDSSCSFVGKTWTEYMKHLAASHSEPTICDVCNRKFKNKTHLKDHKRTHEVERVVYKCPRDGCDRTYTKKFGLQSHILSFHEDSRPFACGHPGCGKTFAMKQSLDRHANTHDPEKKKMKKPRPKKSLASRLSGYNPKKLSKTPKSASELGKLPPDGPPDTATAMQNLSIK.

9 C2H2-type zinc fingers span residues 13–37 (YICSFADCSASYNKNWKLQAHLCKH), 43–67 (FPCTVEGCGKGFVTLFHLTRHSMTH), 73–98 (CKCDAPDCDLSFTTMTNLRKHYQRAH), 105–129 (YECYFADCGQTFKKHNQLKLHQYIH), 135–159 (FKCNHEGCDKSFSSPSRLKRHEKVH), 162–188 (YPCQKDSSCSFVGKTWTEYMKHLAASH), 192–214 (TICDVCNRKFKNKTHLKDHKRTH), 221–246 (YKCPRDGCDRTYTKKFGLQSHILSFH), and 252–276 (FACGHPGCGKTFAMKQSLDRHANTH). The segment covering 269–280 (LDRHANTHDPEK) has biased composition (basic and acidic residues). A disordered region spans residues 269–335 (LDRHANTHDP…ATAMQNLSIK (67 aa)). Over residues 281-292 (KKMKKPRPKKSL) the composition is skewed to basic residues.

It is found in the nucleus. In terms of biological role, involved in ribosomal large subunit biogenesis. Interacts with the internal control region (ICR) of approximately 50 bases within the 5S RNA genes, is required for correct transcription of these genes by RNA polymerase III. Also binds the transcribed 5S RNA's. This Lithobates pipiens (Northern leopard frog) protein is Transcription factor IIIA (gtf3a).